A 267-amino-acid chain; its full sequence is Tryptophan synthase alpha chain (267 aa).

Residues glutamate 44 and aspartate 55 each act as proton acceptor in the active site.

The protein belongs to the TrpA family. As to quaternary structure, tetramer of two alpha and two beta chains.

The enzyme catalyses (1S,2R)-1-C-(indol-3-yl)glycerol 3-phosphate + L-serine = D-glyceraldehyde 3-phosphate + L-tryptophan + H2O. It participates in amino-acid biosynthesis; L-tryptophan biosynthesis; L-tryptophan from chorismate: step 5/5. The alpha subunit is responsible for the aldol cleavage of indoleglycerol phosphate to indole and glyceraldehyde 3-phosphate. The chain is Tryptophan synthase alpha chain from Coxiella burnetii (strain Dugway 5J108-111).